Consider the following 234-residue polypeptide: 7-carboxy-7-deazaguanine synthase (234 aa).

Residues 36–38 and arginine 51 contribute to the substrate site; that span reads IQG. Residues 42 to 234 enclose the Radical SAM core domain; the sequence is FVGYPSIFIR…LQTHKFLGIE (193 aa). The [4Fe-4S] cluster site is built by cysteine 55, cysteine 59, and cysteine 62. Threonine 64 lines the Mg(2+) pocket. A substrate-binding site is contributed by threonine 100. S-adenosyl-L-methionine is bound by residues glycine 102, 144-146, and 195-198; these read SPK and QSMD.

The protein belongs to the radical SAM superfamily. 7-carboxy-7-deazaguanine synthase family. Homodimer. [4Fe-4S] cluster is required as a cofactor. S-adenosyl-L-methionine serves as cofactor. The cofactor is Mg(2+).

It catalyses the reaction 6-carboxy-5,6,7,8-tetrahydropterin + H(+) = 7-carboxy-7-deazaguanine + NH4(+). Its pathway is purine metabolism; 7-cyano-7-deazaguanine biosynthesis. Functionally, catalyzes the complex heterocyclic radical-mediated conversion of 6-carboxy-5,6,7,8-tetrahydropterin (CPH4) to 7-carboxy-7-deazaguanine (CDG), a step common to the biosynthetic pathways of all 7-deazapurine-containing compounds. The polypeptide is 7-carboxy-7-deazaguanine synthase (Rickettsia prowazekii (strain Madrid E)).